A 435-amino-acid chain; its full sequence is Tubulin-like protein TubZ (435 aa).

GTP is bound by residues 25-26 (MG), 124-126 (GTG), asparagine 185, and asparagine 209. The interval 403–435 (QEEKPKKKKLNFGAEPEAEVADDSQPTKKKLSF) is disordered.

It belongs to the FtsZ family. TubZ subfamily. As to quaternary structure, polymerizes to form two-stranded filaments and bundles at higher concentration in the presence of GTP. Binds to the TubR-tubC protein DNA complex.

It localises to the cytoplasm. It carries out the reaction GTP + H2O = GDP + phosphate + H(+). With respect to regulation, GTPase inhibited by GTP-gamma-S, which also stabilizes filaments. Its function is as follows. A tubulin-like, filament forming GTPase; the motor component of the type III plasmid partition system which ensures correct segregation of the pXO1 plasmid. Essential for plasmid replication. The filaments seed from a DNA centromere-like site (tubC)-TubR complex which extends to surround the TubZ filaments. Highly dynamic filaments grow at the plus end and depolymerize at the minus end, a process called treadmilling. TubR-tubC complexes track the depolymerizing minus end of the filament, probably pulling plasmid within the cell. Has a high GTPase activity; in the presence of GTP assembles into dynamic filaments which bind almost exclusively GDP. Filament formation is cooperative, requiring a critical concentration. Formation occurs very quickly and is followed by disassembly as GTP is consumed. Small amounts of GTP-gamma-S stabilize filaments. Has high GTP and dGTPase activity, 6-fold lower ATPase activity. Forms filaments in the presence of ATP that also disassemble. Weakly binds DNA in a GTP-dependent, non-sequence-specific manner; GTP hydrolysis is not required for DNA-binding. The protein is Tubulin-like protein TubZ of Bacillus anthracis.